The sequence spans 268 residues: Bidirectional sugar transporter N3 (268 aa).

The Extracellular segment spans residues 1–7; that stretch reads MAISHNT. Residues 8–28 traverse the membrane as a helical segment; sequence LAFTFGMLGNVISFLVFLAPI. One can recognise a MtN3/slv 1 domain in the interval 10–96; the sequence is FTFGMLGNVI…ILYIIYAPRD (87 aa). Residues 29 to 42 lie on the Cytoplasmic side of the membrane; sequence STFYRIYKKKSTEG. The helical transmembrane segment at 43–63 threads the bilayer; sequence FQSLPYLVALFSSMLWLYYAL. Topologically, residues 64 to 70 are extracellular; sequence LKKDAFL. Residues 71–91 traverse the membrane as a helical segment; that stretch reads LITINSFGCVVETIYIILYII. Over 92 to 103 the chain is Cytoplasmic; it reads YAPRDARNLTFK. A helical transmembrane segment spans residues 104–124; that stretch reads LLSAMNVGSFALILIVTNYAV. The Extracellular portion of the chain corresponds to 125–131; that stretch reads HGPLRVQ. Positions 131–214 constitute a MtN3/slv 2 domain; the sequence is QVLGWVCVSL…QMLLYAIYRN (84 aa). Residues 132 to 152 traverse the membrane as a helical segment; that stretch reads VLGWVCVSLSVSVFAAPLSIV. Topologically, residues 153-165 are cytoplasmic; that stretch reads AQVVRTKSVEFMP. Residues 166–186 form a helical membrane-spanning segment; that stretch reads FNLSFTLTLSATMWFGYGFFL. At 187 to 190 the chain is on the extracellular side; it reads KDIC. A helical membrane pass occupies residues 191 to 211; that stretch reads IXLPNVLGXVLGLLQMLLYAI. Residues 212–268 are Cytoplasmic-facing; sequence YRNGGEKAMKKEKKAPIEPPKSIVIETQLEKIEQEKKNKDDDNEEKDKSEEPIGCGV. Positions 234–262 form a coiled coil; the sequence is IVIETQLEKIEQEKKNKDDDNEEKDKSEE. The span at 243-262 shows a compositional bias: basic and acidic residues; sequence IEQEKKNKDDDNEEKDKSEE. Residues 243–268 are disordered; that stretch reads IEQEKKNKDDDNEEKDKSEEPIGCGV.

The protein belongs to the SWEET sugar transporter family. As to quaternary structure, forms homooligomers and/or heterooligomers.

It localises to the cell membrane. Mediates both low-affinity uptake and efflux of sugar across the plasma membrane. The sequence is that of Bidirectional sugar transporter N3 (N3) from Medicago truncatula (Barrel medic).